The primary structure comprises 820 residues: Probable ATP-dependent RNA helicase DDX23 (820 aa).

A compositionally biased stretch (basic and acidic residues) spans 1 to 42 (MAGELADKKDRDASPSKEERKRSRTPDRERDRDRDRKSSPSK). The interval 1–244 (MAGELADKKD…QKIREEKDKS (244 aa)) is disordered. 2 positions are modified to phosphoserine: Ser14 and Ser16. The segment covering 43 to 65 (DRKRHRSRDRRRGGSRSRSRSRS) has biased composition (basic residues). Residues 66 to 105 (KSAERERRHKERERDKERDRNKKDRDRDKDGHRRDKDRKR) show a composition bias toward basic and acidic residues. 2 positions are modified to phosphoserine: Ser107 and Ser109. Basic and acidic residues-rich tracts occupy residues 112-137 (RGKDFKSRKDRDSKKDEEDEHGDKKP), 147-226 (LLAK…RETN), and 233-244 (GRQKIREEKDKS). The Q motif motif lies at 391-419 (RSWKDSSLPPHILEVIDKCGYKEPTPIQR). A Helicase ATP-binding domain is found at 422–627 (IPIGLQNRDI…RSYLRRPAVV (206 aa)). An ATP-binding site is contributed by 435 to 442 (AETGSGKT). The DEAD box motif lies at 549–552 (DEAD). The Helicase C-terminal domain maps to 651 to 799 (KRKKLLAILE…SCPPELANHP (149 aa)). Residues Lys686 and Lys811 each participate in a glycyl lysine isopeptide (Lys-Gly) (interchain with G-Cter in SUMO2) cross-link.

The protein belongs to the DEAD box helicase family. DDX23/PRP28 subfamily. In terms of assembly, the phosphorylated form (by SRPK2) is a component of the U4/U6-U5 tri-snRNP complex composed of the U4, U6 and U5 snRNAs and at least PRPF3, PRPF4, PRPF6, PRPF8, PRPF31, SNRNP200, TXNL4A, WDR57, SNRNP40, DDX23, CD2BP2, PPIH, SNU13, EFTUD2, SART1 and USP39. Identified in the spliceosome C complex. Interacts with ERBB4. Interacts with ERCC6. Post-translationally, in vitro phosphorylated by CLK1 and U1 snRNP-associated protein kinase. Phosphorylated by SRPK2 and this phosphorylation is required for its association with the tri-snRNP (U4/U6-U5 tri-small nuclear ribonucleoproteins) and subsequent spliceosomal B complex formation. May be phosphorylated by SRPK2 on Ser residues in the SR domain; the phosphorylation is required for the removal of inappropriate R-loops during transcription.

The protein resides in the nucleus. The protein localises to the chromosome. It carries out the reaction ATP + H2O = ADP + phosphate + H(+). Involved in pre-mRNA splicing and its phosphorylated form (by SRPK2) is required for spliceosomal B complex formation. Independently of its spliceosome formation function, required for the suppression of incorrect R-loops formed during transcription; R-loops are composed of a DNA:RNA hybrid and the associated non-template single-stranded DNA. This chain is Probable ATP-dependent RNA helicase DDX23, found in Homo sapiens (Human).